We begin with the raw amino-acid sequence, 377 residues long: Nitric oxide reductase FlRd-NAD(+) reductase (377 aa).

It belongs to the FAD-dependent oxidoreductase family. The cofactor is FAD.

The protein localises to the cytoplasm. The enzyme catalyses 2 reduced [nitric oxide reductase rubredoxin domain] + NAD(+) + H(+) = 2 oxidized [nitric oxide reductase rubredoxin domain] + NADH. Its pathway is nitrogen metabolism; nitric oxide reduction. One of at least two accessory proteins for anaerobic nitric oxide (NO) reductase. Reduces the rubredoxin moiety of NO reductase. The polypeptide is Nitric oxide reductase FlRd-NAD(+) reductase (Klebsiella pneumoniae (strain 342)).